Reading from the N-terminus, the 332-residue chain is Biotin synthase (332 aa).

The 230-residue stretch at 53-282 folds into the Radical SAM core domain; that stretch reads HFGKKVKLNM…TKEIRISGGR (230 aa). Positions 71, 75, and 78 each coordinate [4Fe-4S] cluster. [2Fe-2S] cluster is bound by residues cysteine 115, cysteine 147, cysteine 207, and arginine 277.

It belongs to the radical SAM superfamily. Biotin synthase family. Homodimer. The cofactor is [4Fe-4S] cluster. Requires [2Fe-2S] cluster as cofactor.

The catalysed reaction is (4R,5S)-dethiobiotin + (sulfur carrier)-SH + 2 reduced [2Fe-2S]-[ferredoxin] + 2 S-adenosyl-L-methionine = (sulfur carrier)-H + biotin + 2 5'-deoxyadenosine + 2 L-methionine + 2 oxidized [2Fe-2S]-[ferredoxin]. The protein operates within cofactor biosynthesis; biotin biosynthesis; biotin from 7,8-diaminononanoate: step 2/2. Its function is as follows. Catalyzes the conversion of dethiobiotin (DTB) to biotin by the insertion of a sulfur atom into dethiobiotin via a radical-based mechanism. The chain is Biotin synthase from Bacillus cereus (strain ATCC 14579 / DSM 31 / CCUG 7414 / JCM 2152 / NBRC 15305 / NCIMB 9373 / NCTC 2599 / NRRL B-3711).